The chain runs to 578 residues: Type I restriction enzyme MjaVIII methylase subunit (578 aa).

Residues 250 to 255 (EVYTPI), 280 to 282 (SGS), Glu303, and 332 to 333 (DS) each bind S-adenosyl-L-methionine.

The protein belongs to the N(4)/N(6)-methyltransferase family. In terms of assembly, the type I restriction/modification system is composed of three polypeptides R, M and S.

It catalyses the reaction a 2'-deoxyadenosine in DNA + S-adenosyl-L-methionine = an N(6)-methyl-2'-deoxyadenosine in DNA + S-adenosyl-L-homocysteine + H(+). The subtype gamma methyltransferase (M) subunit of a type I restriction enzyme. The M and S subunits together form a methyltransferase (MTase) that methylates A-2 on the top and A-3 on the bottom strand of the sequence 5'-GAYN(5)GTAA-3'. In the presence of the R subunit the complex can also act as an endonuclease, binding to the same target sequence but cutting the DNA some distance from this site. Whether the DNA is cut or modified depends on the methylation state of the target sequence. When the target site is unmodified, the DNA is cut. When the target site is hemimethylated, the complex acts as a maintenance MTase modifying the DNA so that both strands become methylated. After locating a non-methylated recognition site, the enzyme complex serves as a molecular motor that translocates DNA in an ATP-dependent manner until a collision occurs that triggers cleavage. In Methanocaldococcus jannaschii (strain ATCC 43067 / DSM 2661 / JAL-1 / JCM 10045 / NBRC 100440) (Methanococcus jannaschii), this protein is Type I restriction enzyme MjaVIII methylase subunit.